We begin with the raw amino-acid sequence, 647 residues long: Paraneoplastic antigen Ma6E (647 aa).

Disordered stretches follow at residues 111–199 (QPQG…AGGA), 227–254 (GAAGEAGGAGEAGAAGEAGGAGEGRAAG), 508–580 (AAAP…VPWG), and 608–647 (RGQEARKPPLEGLQTILEEPENEDEDGAGDEGQPKSSQGK). Gly residues-rich tracts occupy residues 122-149 (GEGGGAGEAGGVGEVGAAGEAGGTGEAG), 158-199 (GEAG…AGGA), and 227-251 (GAAGEAGGAGEAGAAGEAGGAGEGR). A compositionally biased stretch (low complexity) spans 517-570 (PAAAQASPAQGNASEAGPGAEDAAEAASATKEAARGAPAAGEGESAPAGPEGLG). Over residues 625–636 (EEPENEDEDGAG) the composition is skewed to acidic residues.

The sequence is that of Paraneoplastic antigen Ma6E from Homo sapiens (Human).